A 343-amino-acid chain; its full sequence is MKCTIVGATGYAAIELIRLIELHPHLEIVSLISDSQTNQEMNDLYSFMNNKQFPVLTAFSLEQIEAVETDLLFLATPSGISTKYLKQLDDWKGTVIDLSGDLRLEKSLYEKWYPHESVDTVLQKKATYGLTEWKREQIKDSRLIANPGCYATAVLLGLLPLLEERVIDPSQIIIHASSGLSGAGKTLTEQTHHVRSSENVRLYKMNQHQHIPEIESIAEDITGQQITVSLATYLVPLNRGIMATMTLQPLVEKTEAEWRTWFIEKYKQESFIRVGQTDPEIKSAAGSNYCDISVYLDTRTGRLTVVSVLDNMQKGAAGQAIQNANVIGGYPETLGLTQQPFFI.

The active site involves Cys149.

Belongs to the NAGSA dehydrogenase family. Type 1 subfamily.

It localises to the cytoplasm. The enzyme catalyses N-acetyl-L-glutamate 5-semialdehyde + phosphate + NADP(+) = N-acetyl-L-glutamyl 5-phosphate + NADPH + H(+). Its pathway is amino-acid biosynthesis; L-arginine biosynthesis; N(2)-acetyl-L-ornithine from L-glutamate: step 3/4. Its function is as follows. Catalyzes the NADPH-dependent reduction of N-acetyl-5-glutamyl phosphate to yield N-acetyl-L-glutamate 5-semialdehyde. This is N-acetyl-gamma-glutamyl-phosphate reductase from Exiguobacterium sibiricum (strain DSM 17290 / CCUG 55495 / CIP 109462 / JCM 13490 / 255-15).